Consider the following 178-residue polypeptide: Small ribosomal subunit protein uS5 (178 aa).

The S5 DRBM domain occupies 15–78; the sequence is FEEKIIEIRR…SAAKRNIIEV (64 aa).

The protein belongs to the universal ribosomal protein uS5 family. In terms of assembly, part of the 30S ribosomal subunit. Contacts proteins S4 and S8.

Its function is as follows. With S4 and S12 plays an important role in translational accuracy. Located at the back of the 30S subunit body where it stabilizes the conformation of the head with respect to the body. This Thermotoga sp. (strain RQ2) protein is Small ribosomal subunit protein uS5.